A 318-amino-acid chain; its full sequence is Olfactory receptor-like protein COR3 (318 aa).

Topologically, residues M1 to P26 are extracellular. Residue N5 is glycosylated (N-linked (GlcNAc...) asparagine). A helical membrane pass occupies residues L27–I49. Residues S50–T57 lie on the Cytoplasmic side of the membrane. The helical transmembrane segment at P58–P79 threads the bilayer. Topologically, residues K80–Q100 are extracellular. Residues C97 and C179 are joined by a disulfide bond. The helical transmembrane segment at Y101–Y120 threads the bilayer. The Cytoplasmic segment spans residues D121–A139. The chain crosses the membrane as a helical span at residues V140 to L164. At K165 to L205 the chain is on the extracellular side. The chain crosses the membrane as a helical span at residues F206–V226. At M227–S239 the chain is on the cytoplasmic side. The helical transmembrane segment at T240 to L260 threads the bilayer. At R261–D271 the chain is on the extracellular side. Residues K272–W292 traverse the membrane as a helical segment. At R293 to Q318 the chain is on the cytoplasmic side.

It belongs to the G-protein coupled receptor 1 family.

It is found in the cell membrane. Odorant receptor. The protein is Olfactory receptor-like protein COR3 (COR3) of Gallus gallus (Chicken).